Here is a 353-residue protein sequence, read N- to C-terminus: MKVALTGGGTGGHLSIAKALAIELEKQGVEAIYLGSTYGQDKEWFEDSPLFSECYFFNTQGVVNKSFFKKIGSLFLQAKAALKAKEILKKHQITHTISVGGFSAGPASFASLLNKIPLYIHEQNAIKGSLNRYLSPKAKAVFSSYAFKDKGNHIVTSYPVQNVFFDHARTRTEIKHILFIGGSQGAKAINEFALFNAPKLTKQGIEITHICGPNSYERVRFFYQELGLLDKIVLFAFHNNIIEVMQKADLCVSRAGASSVWELCANGLPTIFIPYPFASNNHQYHNVLEFEKENLCYVVPQNELLPKKLFEVIRKLNQKDEQGHKNLTIISNKLQQKIAKDGAKTIIERILSA.

Residues Thr10–Gly12, Asn124, Ser183, and Gln283 contribute to the UDP-N-acetyl-alpha-D-glucosamine site.

The protein belongs to the glycosyltransferase 28 family. MurG subfamily.

It localises to the cell inner membrane. It catalyses the reaction di-trans,octa-cis-undecaprenyl diphospho-N-acetyl-alpha-D-muramoyl-L-alanyl-D-glutamyl-meso-2,6-diaminopimeloyl-D-alanyl-D-alanine + UDP-N-acetyl-alpha-D-glucosamine = di-trans,octa-cis-undecaprenyl diphospho-[N-acetyl-alpha-D-glucosaminyl-(1-&gt;4)]-N-acetyl-alpha-D-muramoyl-L-alanyl-D-glutamyl-meso-2,6-diaminopimeloyl-D-alanyl-D-alanine + UDP + H(+). It participates in cell wall biogenesis; peptidoglycan biosynthesis. Cell wall formation. Catalyzes the transfer of a GlcNAc subunit on undecaprenyl-pyrophosphoryl-MurNAc-pentapeptide (lipid intermediate I) to form undecaprenyl-pyrophosphoryl-MurNAc-(pentapeptide)GlcNAc (lipid intermediate II). The protein is UDP-N-acetylglucosamine--N-acetylmuramyl-(pentapeptide) pyrophosphoryl-undecaprenol N-acetylglucosamine transferase of Helicobacter acinonychis (strain Sheeba).